The sequence spans 1008 residues: G protein-regulated inducer of neurite outgrowth 1 (1008 aa).

The disordered stretch occupies residues 1-859; the sequence is MDTAEDPAWL…SPPSRRDAGL (859 aa). Threonine 60 carries the phosphothreonine modification. A phosphoserine mark is found at serine 64 and serine 75. The span at 117 to 127 shows a compositional bias: polar residues; the sequence is ISGTPEATTSG. Basic and acidic residues-rich tracts occupy residues 137 to 159, 167 to 178, 230 to 269, and 279 to 291; these read TEPKSSDDRNPMFLEKMDFKSSK, GKEDPGSSRKAD, PRKEDPGSLRKVDPVSSDKVDPVFPRKEEPRYSGKEHPVS, and EKVDLVLSGKRDP. Serine 237 is modified (phosphoserine). Polar residues-rich tracts occupy residues 326–336 and 391–406; these read SGKNGPVSSGT and HTDTTASAKTDLTSLK. Residues serine 436 and serine 452 each carry the phosphoserine modification. The span at 454–466 shows a compositional bias: basic and acidic residues; sequence GKEDPVSSRREDP. The segment covering 481–491 has biased composition (polar residues); sequence PESSGKTNPVS. The span at 549-559 shows a compositional bias: basic and acidic residues; that stretch reads GKEDPVSKGKA. Residue serine 615 is modified to Phosphoserine. Over residues 643–656 the composition is skewed to low complexity; it reads PGQEGAAAPGEAGA. A compositionally biased stretch (basic and acidic residues) spans 659-679; the sequence is LKKETPQASEKVDPGSCRKAE. The residue at position 737 (serine 737) is a Phosphoserine. Over residues 742–752 the composition is skewed to basic and acidic residues; the sequence is RGSEGRVEPKA. Over residues 755–764 the composition is skewed to polar residues; it reads VSSTEASSLG. Residue serine 799 is modified to Phosphoserine. Residues 838–847 show a composition bias toward low complexity; sequence SAFSFQAAPR. Position 877 is a phosphothreonine (threonine 877). Serine 895 and serine 914 each carry phosphoserine. Positions 899–1008 are interaction with GNAO1; sequence AAVAPPEPAE…CCSRAGPTAE (110 aa). The disordered stretch occupies residues 943–986; it reads ERQIEEHGRQGAPAPPPAARAGPGRSGSVRTAPPDGAAKRPPGL. At serine 993 the chain carries Phosphoserine. Residues cysteine 999 and cysteine 1000 are each lipidated (S-palmitoyl cysteine).

As to quaternary structure, interacts with activated forms of GNAI1, GNAO1 and GNAZ. Palmitoylation on Cys-999 and/or Cys-1000 is required for membrane targeting. In terms of tissue distribution, widely expressed in the central nervous system, with highest levels in spinal cord.

The protein localises to the cell membrane. The protein resides in the cell projection. It is found in the growth cone. Functionally, may be involved in neurite outgrowth. The sequence is that of G protein-regulated inducer of neurite outgrowth 1 (GPRIN1) from Homo sapiens (Human).